The primary structure comprises 458 residues: Tissue-resident T-cell transcription regulator protein ZNF683 (458 aa).

2 disordered regions span residues 84–109 (PQDLGEDASNMRHQPPSLYKASTDSE) and 249–275 (TLHSQVESRSSRDTRTPGQAGVAAPTR). C2H2-type zinc fingers lie at residues 301-323 (YECNVCGKNFGQLSNLKVHLRVH), 329-351 (FQCALCQKRFTQLAHLQKHHLVH), and 357-379 (HQCQVCHKRFSSSSNLKTHLRLH).

It belongs to the krueppel C2H2-type zinc-finger protein family. In terms of tissue distribution, expressed in tissue-resident memory T (Trm) cell population in non-lymphoid organs, such as skin and gut. Expressed in innate lymphocytes, including tissue-resident natural killer (trNK) and natural killer T (NKT) cells in thymus, spleen and liver.

The protein localises to the nucleus. Functionally, transcription factor that mediates a transcriptional program in various innate and adaptive immune tissue-resident lymphocyte T-cell types such as tissue-resident memory T (Trm), natural killer (trNK) and natural killer T (NKT) cells and negatively regulates gene expression of proteins that promote the egress of tissue-resident T-cell populations from non-lymphoid organs. Plays a role in the development, retention and long-term establishment of adaptive and innate tissue-resident lymphocyte T-cell types in non-lymphoid organs, such as the skin and gut, but also in other nonbarrier tissues like liver and kidney, and therefore may provide immediate immunological protection against reactivating infections or viral reinfection. Also plays a role in the differentiation of both thymic and peripheral NKT cells. Negatively regulates the accumulation of interferon-gamma (IFN-gamma) in NKT cells at steady state or after antigenic stimulation. Positively regulates granzyme B production in NKT cells after innate stimulation. Associates with the transcriptional repressor PRDM1/BLIMP1 to chromatin at gene promoter regions. This is Tissue-resident T-cell transcription regulator protein ZNF683 from Mus musculus (Mouse).